A 483-amino-acid polypeptide reads, in one-letter code: PAT complex subunit CCDC47 (483 aa).

Positions 1–20 (MKAFHTFCVVLLVFGSVSEA) are cleaved as a signal peptide. The Cytoplasmic portion of the chain corresponds to 21 to 135 (KFDDFEDEED…PAHLQNSWES (115 aa)). Residues 46-118 (MEDSVTESPQ…PDTSSSKNKD (73 aa)) form a disordered region. Over residues 60–104 (TEDDEDETTVELEGQDENQEGDFEDADTQEGDTESEPYDDEEFEG) the composition is skewed to acidic residues. Positions 105-118 (YEDKPDTSSSKNKD) are enriched in basic and acidic residues. The chain crosses the membrane as a helical span at residues 136-155 (YYLEILMVTGLLAYIMNYII). Residues 156–483 (GKNKNSRLAQ…KMKQIKVKAM (328 aa)) are Lumenal-facing. N-linked (GlcNAc...) asparagine glycosylation occurs at Asn178. Residues 424–483 (QRQEAAQSRREEKKRAEKERIMNEEDPEKQRRLEEAALRREQKKLEKKQMKMKQIKVKAM) are disordered. A compositionally biased stretch (basic and acidic residues) spans 430–472 (QSRREEKKRAEKERIMNEEDPEKQRRLEEAALRREQKKLEKKQ). A coiled-coil region spans residues 450-483 (PEKQRRLEEAALRREQKKLEKKQMKMKQIKVKAM). A compositionally biased stretch (basic residues) spans 473–483 (MKMKQIKVKAM).

This sequence belongs to the CCDC47 family. Component of the PAT complex, composed of WDR83OS/Asterix and CCDC47. The PAT complex is part of the multi-pass translocon (MPT) complex, composed of three subcomplexes, the GEL complex (composed of RAB5IF/OPTI and TMCO1), the BOS complex (composed of NCLN/Nicalin, NOMO and TMEM147) and the PAT complex (composed of WDR83OS/Asterix and CCDC47). The MPT complex associates with the SEC61 complex. Interacts with VCP, HSPA5, DERL1, DERL2 and SELENOS.

It localises to the endoplasmic reticulum membrane. The protein localises to the rough endoplasmic reticulum membrane. Functionally, component of the multi-pass translocon (MPT) complex that mediates insertion of multi-pass membrane proteins into the lipid bilayer of membranes. The MPT complex takes over after the SEC61 complex: following membrane insertion of the first few transmembrane segments of proteins by the SEC61 complex, the MPT complex occludes the lateral gate of the SEC61 complex to promote insertion of subsequent transmembrane regions. Within the MPT complex, the PAT subcomplex sequesters any highly polar regions in the transmembrane domains away from the non-polar membrane environment until they can be buried in the interior of the fully assembled protein. Within the PAT subcomplex, CCDC47 occludes the lateral gate of the SEC61 complex. Involved in the regulation of calcium ion homeostasis in the ER. Required for proper protein degradation via the ERAD (ER-associated degradation) pathway. Has an essential role in the maintenance of ER organization during embryogenesis. The chain is PAT complex subunit CCDC47 from Homo sapiens (Human).